Here is a 138-residue protein sequence, read N- to C-terminus: Prefoldin subunit alpha (138 aa).

It belongs to the prefoldin subunit alpha family. In terms of assembly, heterohexamer of two alpha and four beta subunits.

The protein resides in the cytoplasm. Functionally, molecular chaperone capable of stabilizing a range of proteins. Seems to fulfill an ATP-independent, HSP70-like function in archaeal de novo protein folding. The chain is Prefoldin subunit alpha from Methanococcoides burtonii (strain DSM 6242 / NBRC 107633 / OCM 468 / ACE-M).